Consider the following 317-residue polypeptide: SVP1-like protein 2 (317 aa).

2 WD repeats span residues 119–159 (AHST…KMAE) and 164–203 (VDHA…NAPY).

It belongs to the WD repeat PROPPIN family.

The protein resides in the vacuole membrane. It localises to the cytoplasmic vesicle membrane. Involved in mitochondrial or peroxisomal functions and amino acid signaling pathways. The protein is SVP1-like protein 2 (hsv2) of Emericella nidulans (strain FGSC A4 / ATCC 38163 / CBS 112.46 / NRRL 194 / M139) (Aspergillus nidulans).